A 195-amino-acid polypeptide reads, in one-letter code: Imidazoleglycerol-phosphate dehydratase (195 aa).

This sequence belongs to the imidazoleglycerol-phosphate dehydratase family.

It localises to the cytoplasm. It carries out the reaction D-erythro-1-(imidazol-4-yl)glycerol 3-phosphate = 3-(imidazol-4-yl)-2-oxopropyl phosphate + H2O. It functions in the pathway amino-acid biosynthesis; L-histidine biosynthesis; L-histidine from 5-phospho-alpha-D-ribose 1-diphosphate: step 6/9. This Thermotoga maritima (strain ATCC 43589 / DSM 3109 / JCM 10099 / NBRC 100826 / MSB8) protein is Imidazoleglycerol-phosphate dehydratase.